Here is a 231-residue protein sequence, read N- to C-terminus: Biosynthetic peptidoglycan transglycosylase (231 aa).

A helical transmembrane segment spans residues 7–27 (LLFWLILVPILLVLLMQLYFF).

It belongs to the glycosyltransferase 51 family.

Its subcellular location is the cell inner membrane. It catalyses the reaction [GlcNAc-(1-&gt;4)-Mur2Ac(oyl-L-Ala-gamma-D-Glu-L-Lys-D-Ala-D-Ala)](n)-di-trans,octa-cis-undecaprenyl diphosphate + beta-D-GlcNAc-(1-&gt;4)-Mur2Ac(oyl-L-Ala-gamma-D-Glu-L-Lys-D-Ala-D-Ala)-di-trans,octa-cis-undecaprenyl diphosphate = [GlcNAc-(1-&gt;4)-Mur2Ac(oyl-L-Ala-gamma-D-Glu-L-Lys-D-Ala-D-Ala)](n+1)-di-trans,octa-cis-undecaprenyl diphosphate + di-trans,octa-cis-undecaprenyl diphosphate + H(+). It participates in cell wall biogenesis; peptidoglycan biosynthesis. Functionally, peptidoglycan polymerase that catalyzes glycan chain elongation from lipid-linked precursors. The sequence is that of Biosynthetic peptidoglycan transglycosylase from Herminiimonas arsenicoxydans.